Consider the following 550-residue polypeptide: CCR4-NOT transcription complex subunit 6-like-B (550 aa).

The segment at 1 to 148 (MPKEKYDPPD…LYQEPDGMRK (148 aa)) is required for interaction with cnot1, cnot3 and cnot7. LRR repeat units lie at residues 52–73 (HLTV…IAKL), 75–96 (NLVY…LGNV), 98–120 (SLRE…GRLF), and 121–143 (RLQT…YQEP). The interval 153–550 (MLDNLSVHPE…INGVHLPSRR (398 aa)) is nuclease domain. E235 provides a ligand contact to Mg(2+). Residues E235, E271, H355, and P360 each coordinate substrate. Mg(2+) is bound at residue D405. The Proton donor/acceptor role is filled by D405. Substrate is bound by residues N407, N474, and F479.

The protein belongs to the CCR4/nocturin family. In terms of assembly, component of the CCR4-NOT complex. It depends on Mg(2+) as a cofactor.

Its subcellular location is the cytoplasm. It localises to the nucleus. It carries out the reaction Exonucleolytic cleavage of poly(A) to 5'-AMP.. Its function is as follows. Poly(A) nuclease with 3'-5' RNase activity. Catalytic component of the CCR4-NOT complex which is one of the major cellular mRNA deadenylases and is linked to various cellular processes including bulk mRNA degradation, miRNA-mediated repression, translational repression during translational initiation and general transcription regulation. Additional complex functions may be a consequence of its influence on mRNA expression. The protein is CCR4-NOT transcription complex subunit 6-like-B (cnot6l-b) of Xenopus laevis (African clawed frog).